Here is a 182-residue protein sequence, read N- to C-terminus: ATP-dependent protease subunit HslV (182 aa).

Thr-9 is a catalytic residue. Residues Ala-167, Cys-170, and Thr-173 each contribute to the Na(+) site.

This sequence belongs to the peptidase T1B family. HslV subfamily. In terms of assembly, a double ring-shaped homohexamer of HslV is capped on each side by a ring-shaped HslU homohexamer. The assembly of the HslU/HslV complex is dependent on binding of ATP.

It is found in the cytoplasm. The catalysed reaction is ATP-dependent cleavage of peptide bonds with broad specificity.. With respect to regulation, allosterically activated by HslU binding. Functionally, protease subunit of a proteasome-like degradation complex believed to be a general protein degrading machinery. This chain is ATP-dependent protease subunit HslV, found in Enterococcus faecalis (strain ATCC 700802 / V583).